The sequence spans 136 residues: UPF0310 protein SMU_442 (136 aa).

The protein belongs to the UPF0310 family.

The sequence is that of UPF0310 protein SMU_442 from Streptococcus mutans serotype c (strain ATCC 700610 / UA159).